A 415-amino-acid chain; its full sequence is DNA polymerase IV (415 aa).

One can recognise a UmuC domain in the interval 15–196; sequence ILHVDMNCFF…LSVEAMHGIG (182 aa). D19 and D115 together coordinate Mg(2+). E116 is a catalytic residue. Basic and acidic residues predominate over residues 235 to 246; the sequence is KRAKGTDDREVD. The disordered stretch occupies residues 235–260; sequence KRAKGTDDREVDPSQMGQHKSVGNSM. The segment covering 249–260 has biased composition (polar residues); that stretch reads QMGQHKSVGNSM.

It belongs to the DNA polymerase type-Y family. As to quaternary structure, monomer. The cofactor is Mg(2+).

It is found in the cytoplasm. It catalyses the reaction DNA(n) + a 2'-deoxyribonucleoside 5'-triphosphate = DNA(n+1) + diphosphate. Poorly processive, error-prone DNA polymerase involved in untargeted mutagenesis. Copies undamaged DNA at stalled replication forks, which arise in vivo from mismatched or misaligned primer ends. These misaligned primers can be extended by PolIV. Exhibits no 3'-5' exonuclease (proofreading) activity. May be involved in translesional synthesis, in conjunction with the beta clamp from PolIII. This chain is DNA polymerase IV, found in Bacillus cereus (strain ATCC 14579 / DSM 31 / CCUG 7414 / JCM 2152 / NBRC 15305 / NCIMB 9373 / NCTC 2599 / NRRL B-3711).